A 428-amino-acid chain; its full sequence is MNVLVIGSGGREHTIAWKFAQSEKVERVYVAPGNDGMSDVATCVAISEQDHDQLVAFAKENKIGLTFVGPEVPLLAGIVDRFQEEGLRVFGPSKRAAEIEGSKSYAKQVMKTYNIPTGSYEVFTSFDEAKAYVEAEGVPIVIKADGLAAGKGVVVALTNEEAIAALDDMLNQDKFGGAGARVVIEEYLEGEELSLMAFVHGETVIPMVGAQDHKRAFDGDQGPNTGGMGAYSPVPQFSDVQLKQAVNEILIPTARALMQEERSFTGILYAGLMMTADGPKVIEFNARFGDPETQVVLPRLKSDLVNVIESLLDGQEPELEWDEQAVLGVVLATKGYPGSYEKGYTISGLEQLEDDTLVFHAGTKREEEELVTNGGRVLLVAKQASTLREAQAAVYEELNKVKSDGLFYRKDIGSKAIAERAVSSQTEQ.

One can recognise an ATP-grasp domain in the interval 107–313; sequence KQVMKTYNIP…LVNVIESLLD (207 aa). 133–194 contributes to the ATP binding site; it reads VEAEGVPIVI…EEYLEGEELS (62 aa). Glu-283 and Asn-285 together coordinate Mg(2+).

It belongs to the GARS family. It depends on Mg(2+) as a cofactor. Mn(2+) serves as cofactor.

The enzyme catalyses 5-phospho-beta-D-ribosylamine + glycine + ATP = N(1)-(5-phospho-beta-D-ribosyl)glycinamide + ADP + phosphate + H(+). Its pathway is purine metabolism; IMP biosynthesis via de novo pathway; N(1)-(5-phospho-D-ribosyl)glycinamide from 5-phospho-alpha-D-ribose 1-diphosphate: step 2/2. The protein is Phosphoribosylamine--glycine ligase of Halalkalibacterium halodurans (strain ATCC BAA-125 / DSM 18197 / FERM 7344 / JCM 9153 / C-125) (Bacillus halodurans).